A 427-amino-acid polypeptide reads, in one-letter code: Probable G-protein coupled receptor 150 (427 aa).

The Extracellular portion of the chain corresponds to 1 to 3 (MED). The chain crosses the membrane as a helical span at residues 4 to 24 (PFSLAILNPASNLSVPTQPSW). The Cytoplasmic portion of the chain corresponds to 25–50 (SLNLTSEQGASVPGPHSPPRGPPSHR). A helical transmembrane segment spans residues 51–71 (IHLVFLGIILVAAVAGNTTVL). The Extracellular segment spans residues 72-89 (CRLCGGSSGPWPGPKRRK). The helical transmembrane segment at 90–110 (MDFLLVQLAAADLYASGGTAL) threads the bilayer. The Cytoplasmic portion of the chain corresponds to 111-170 (SQLAWELLGDPRPALGDLACRLSHLLQASGRGASAHLVALIALERQLAVRIPQGPQLPAR). Residues 171–191 (ALAALSWLLALLLALPPTFVV) traverse the membrane as a helical segment. At 192 to 230 (RWDAPPSSTANAWPGKHCCRGIFAPLPRWHLQVYALYEA) the chain is on the extracellular side. The chain crosses the membrane as a helical span at residues 231–251 (IVGFAAPVALLGFSCGHLLCV). Over 252–286 (WWQRGSQAPVARMPWSPSMARASLPSALPQAKVQS) the chain is Cytoplasmic. The chain crosses the membrane as a helical span at residues 287–307 (LKMSLALALLFVGCDLPYFAA). The Extracellular segment spans residues 308–327 (RLAAAWSSKPAGDWERESLV). Residues 328–348 (AAMRVLEVANSAINPLIYLFF) form a helical membrane-spanning segment. Over 349–427 (QAGDCRLWRR…PPPCSCESAF (79 aa)) the chain is Cytoplasmic. The interval 402–427 (EERNQGCLRPPPPRPRPPPCSCESAF) is disordered. Positions 410 to 421 (RPPPPRPRPPPC) are enriched in pro residues.

This sequence belongs to the G-protein coupled receptor 1 family.

Its subcellular location is the cell membrane. In terms of biological role, orphan receptor. The chain is Probable G-protein coupled receptor 150 (Gpr150) from Mus musculus (Mouse).